Here is a 271-residue protein sequence, read N- to C-terminus: Protein PXR1 (271 aa).

Disordered stretches follow at residues 1 to 26 (MGLA…NNTS) and 149 to 233 (KKRP…DSAA). A compositionally biased stretch (polar residues) spans 17 to 26 (RNTTWSNNTS). The G-patch domain maps to 25–71 (TSRFGHKHLEKLGWKPGSGLGLVPDSTTSHIKVSIKDDNLGLGAKLK). Basic residues predominate over residues 165–205 (KKTKKVKKEKKVKKVKKEKKEKKEKKDKKEKKVKKEKKEKK). Residues 206–230 (EKKLKDKHSKDTNEITRDQMLKPRD) show a composition bias toward basic and acidic residues.

It belongs to the PINX1 family.

It localises to the nucleus. Its subcellular location is the nucleolus. Involved in rRNA-processing at A0, A1 and A2 sites and negatively regulates telomerase. The sequence is that of Protein PXR1 (PXR1) from Kluyveromyces lactis (strain ATCC 8585 / CBS 2359 / DSM 70799 / NBRC 1267 / NRRL Y-1140 / WM37) (Yeast).